Consider the following 298-residue polypeptide: UDP-3-O-acyl-N-acetylglucosamine deacetylase (298 aa).

The Zn(2+) site is built by H75, H232, and D236. Catalysis depends on H259, which acts as the Proton donor.

It belongs to the LpxC family. Requires Zn(2+) as cofactor.

The enzyme catalyses a UDP-3-O-[(3R)-3-hydroxyacyl]-N-acetyl-alpha-D-glucosamine + H2O = a UDP-3-O-[(3R)-3-hydroxyacyl]-alpha-D-glucosamine + acetate. It participates in glycolipid biosynthesis; lipid IV(A) biosynthesis; lipid IV(A) from (3R)-3-hydroxytetradecanoyl-[acyl-carrier-protein] and UDP-N-acetyl-alpha-D-glucosamine: step 2/6. Functionally, catalyzes the hydrolysis of UDP-3-O-myristoyl-N-acetylglucosamine to form UDP-3-O-myristoylglucosamine and acetate, the committed step in lipid A biosynthesis. The protein is UDP-3-O-acyl-N-acetylglucosamine deacetylase of Wolinella succinogenes (strain ATCC 29543 / DSM 1740 / CCUG 13145 / JCM 31913 / LMG 7466 / NCTC 11488 / FDC 602W) (Vibrio succinogenes).